The primary structure comprises 325 residues: Hydroxymethylglutaryl-CoA lyase, mitochondrial (325 aa).

The N-terminal 27 residues, 1 to 27 (MATVKKVLPRRLVGLATLRAVSTSSVG), are a transit peptide targeting the mitochondrion. Residues 33-300 (VKIVEVGPRD…HTGVNLQKLL (268 aa)) form the Pyruvate carboxyltransferase domain. Arg-41 contributes to the substrate binding site. Asp-42 provides a ligand contact to a divalent metal cation. N6-acetyllysine; alternate is present on Lys-48. Residue Lys-48 is modified to N6-succinyllysine; alternate. The residue at position 111 (Lys-111) is an N6-acetyllysine. N6-acetyllysine; alternate occurs at positions 137 and 179. Lys-137 and Lys-179 each carry N6-succinyllysine; alternate. Positions 233 and 235 each coordinate a divalent metal cation. Cys-266 is a catalytic residue. Asn-275 contributes to the a divalent metal cation binding site. The short motif at 323-325 (CKL) is the Microbody targeting signal element. Residue Lys-324 is modified to N6-acetyllysine.

Belongs to the HMG-CoA lyase family. In terms of assembly, homodimer; disulfide-linked. Can also form homotetramers.

It localises to the mitochondrion matrix. The protein resides in the peroxisome. The enzyme catalyses (3S)-3-hydroxy-3-methylglutaryl-CoA = acetoacetate + acetyl-CoA. It participates in metabolic intermediate metabolism; (S)-3-hydroxy-3-methylglutaryl-CoA degradation; acetoacetate from (S)-3-hydroxy-3-methylglutaryl-CoA: step 1/1. Functionally, mitochondrial 3-hydroxy-3-methylglutaryl-CoA lyase that catalyzes a cation-dependent cleavage of (S)-3-hydroxy-3-methylglutaryl-CoA into acetyl-CoA and acetoacetate, a key step in ketogenesis. Terminal step in leucine catabolism. Ketone bodies (beta-hydroxybutyrate, acetoacetate and acetone) are essential as an alternative source of energy to glucose, as lipid precursors and as regulators of metabolism. This chain is Hydroxymethylglutaryl-CoA lyase, mitochondrial (HMGCL), found in Bos taurus (Bovine).